Reading from the N-terminus, the 88-residue chain is MALKERIGTVVSDKMDKTVVVAVINRYPHPTYKKIVSRTTRYKAHDPENTCALGDRVKIRETRPLSAHKRWAIQEILNKTSQTKEVKK.

The protein belongs to the universal ribosomal protein uS17 family. Part of the 30S ribosomal subunit.

In terms of biological role, one of the primary rRNA binding proteins, it binds specifically to the 5'-end of 16S ribosomal RNA. This Prochlorococcus marinus (strain MIT 9312) protein is Small ribosomal subunit protein uS17.